Consider the following 300-residue polypeptide: Cation-efflux pump FieF (300 aa).

The next 4 helical transmembrane spans lie at 12-32 (AAIA…FAWW), 39-59 (ILAA…NLLV), 82-102 (AALA…LTGI), and 114-134 (PGVG…LVSF). Aspartate 45 and aspartate 49 together coordinate Zn(2+). 2 residues coordinate Zn(2+): histidine 153 and aspartate 157. A run of 2 helical transmembrane segments spans residues 156 to 176 (SDVM…YGWH) and 178 to 198 (ADAL…LRMG).

Belongs to the cation diffusion facilitator (CDF) transporter (TC 2.A.4) family. FieF subfamily. As to quaternary structure, homodimer.

The protein resides in the cell inner membrane. It catalyses the reaction Zn(2+)(in) + H(+)(out) = Zn(2+)(out) + H(+)(in). The catalysed reaction is Cd(2+)(in) + H(+)(out) = Cd(2+)(out) + H(+)(in). It carries out the reaction Fe(2+)(in) + H(+)(out) = Fe(2+)(out) + H(+)(in). In terms of biological role, divalent metal cation transporter which exports Zn(2+), Cd(2+) and possibly Fe(2+). May be involved in zinc and iron detoxification by efflux. This is Cation-efflux pump FieF from Shigella flexneri serotype 5b (strain 8401).